We begin with the raw amino-acid sequence, 377 residues long: Chaperone protein DnaJ (377 aa).

One can recognise a J domain in the interval D4–G69. A CR-type zinc finger spans residues G135–E213. 8 residues coordinate Zn(2+): C148, C151, C165, C168, C187, C190, C201, and C204. CXXCXGXG motif repeat units lie at residues C148 to G155, C165 to G172, C187 to G194, and C201 to G208.

Belongs to the DnaJ family. Homodimer. Requires Zn(2+) as cofactor.

The protein localises to the cytoplasm. Participates actively in the response to hyperosmotic and heat shock by preventing the aggregation of stress-denatured proteins and by disaggregating proteins, also in an autonomous, DnaK-independent fashion. Unfolded proteins bind initially to DnaJ; upon interaction with the DnaJ-bound protein, DnaK hydrolyzes its bound ATP, resulting in the formation of a stable complex. GrpE releases ADP from DnaK; ATP binding to DnaK triggers the release of the substrate protein, thus completing the reaction cycle. Several rounds of ATP-dependent interactions between DnaJ, DnaK and GrpE are required for fully efficient folding. Also involved, together with DnaK and GrpE, in the DNA replication of plasmids through activation of initiation proteins. This is Chaperone protein DnaJ from Brucella abortus (strain S19).